The following is a 229-amino-acid chain: MEGGSFGAGRAGAALDPVSFARRPQTLLRVASWVFSIAVFGPIVNEGYVNADSGPELRCVFNGNAGACRFGVALGLGAFLACSCFLLLDVRFQQISSVRDRRRAVLLDLGFSGLWSFLWFVGFCFLTNQWQRTAPGPGTAQAGDAARAVITFSFFSILSWVALTVKALQRFRLGTDMSLFATEQLGAGAGQTYPGYPVGSGVEGTDTYQSPPFTETLDTSPKGYQVPAY.

Methionine 1 carries the post-translational modification N-acetylmethionine. The 153-residue stretch at 20-172 folds into the MARVEL domain; sequence FARRPQTLLR…LTVKALQRFR (153 aa). Helical transmembrane passes span 30–50, 70–90, 105–125, and 148–168; these read VASWVFSIAVFGPIVNEGYVN, FGVALGLGAFLACSCFLLLDV, VLLDLGFSGLWSFLWFVGFCF, and AVITFSFFSILSWVALTVKAL.

The protein belongs to the synaptogyrin family. As to quaternary structure, interacts (via N-terminus) with SLC6A3 (via N-terminus). May interact with VMAT2.

The protein resides in the cytoplasmic vesicle. It is found in the secretory vesicle. Its subcellular location is the synaptic vesicle membrane. The protein localises to the synapse. May play a role in regulated exocytosis. May indirectly regulate the activity of the plasma membrane dopamine transporter SLC6A3 and thereby regulate dopamine transport back from the synaptic cleft into the presynaptic terminal. This chain is Synaptogyrin-3, found in Bos taurus (Bovine).